Consider the following 245-residue polypeptide: Ribosomal protein L11 methyltransferase (245 aa).

Positions 101, 122, 144, and 184 each coordinate S-adenosyl-L-methionine.

Belongs to the methyltransferase superfamily. PrmA family.

It localises to the cytoplasm. It carries out the reaction L-lysyl-[protein] + 3 S-adenosyl-L-methionine = N(6),N(6),N(6)-trimethyl-L-lysyl-[protein] + 3 S-adenosyl-L-homocysteine + 3 H(+). Its function is as follows. Methylates ribosomal protein L11. The protein is Ribosomal protein L11 methyltransferase of Aquifex aeolicus (strain VF5).